The sequence spans 791 residues: ATR-interacting protein (791 aa).

The tract at residues 1–57 (MAGTSAPGSKRRSEPPAPRPGPPPGTGHPPSKRARGFSAAAAPDPDDPFGAHGDFTA) is disordered. Pro residues predominate over residues 15–27 (PPAPRPGPPPGTG). Over residues 36 to 54 (GFSAAAAPDPDDPFGAHGD) the composition is skewed to low complexity. Residues 108–217 (IKDNFELEVL…TSERANKLAA (110 aa)) adopt a coiled-coil conformation. The interaction with CINP stretch occupies residues 118–156 (QAQYKELKEKMKVMEEEVLIKNGEIKILRDSLHQTESVL). An EEXXXDL motif motif is present at residues 769–776 (EEAALDDL).

The protein belongs to the ATRIP family. Interacts with ATR. Heterodimer with ATR. The heterodimer binds the RPA complex and is then recruited to single-stranded DNA. Interacts with CEP164 (via N-terminus). Interacts with CINP. Post-translationally, phosphorylated by ATR. In terms of tissue distribution, ubiquitous.

The protein resides in the nucleus. Functionally, required for checkpoint signaling after DNA damage. Required for ATR expression, possibly by stabilizing the protein. The sequence is that of ATR-interacting protein (ATRIP) from Homo sapiens (Human).